Consider the following 176-residue polypeptide: NAD(P)H-quinone oxidoreductase subunit 6, chloroplastic (176 aa).

5 consecutive transmembrane segments (helical) span residues 10–30 (FLLV…VLLP), 32–52 (PIYS…FYIL), 61–81 (AQLL…VMFI), 92–112 (LWTV…VSLI), and 152–172 (FFLP…GAIA).

Belongs to the complex I subunit 6 family. NDH is composed of at least 16 different subunits, 5 of which are encoded in the nucleus.

It localises to the plastid. It is found in the chloroplast thylakoid membrane. It catalyses the reaction a plastoquinone + NADH + (n+1) H(+)(in) = a plastoquinol + NAD(+) + n H(+)(out). It carries out the reaction a plastoquinone + NADPH + (n+1) H(+)(in) = a plastoquinol + NADP(+) + n H(+)(out). In terms of biological role, NDH shuttles electrons from NAD(P)H:plastoquinone, via FMN and iron-sulfur (Fe-S) centers, to quinones in the photosynthetic chain and possibly in a chloroplast respiratory chain. The immediate electron acceptor for the enzyme in this species is believed to be plastoquinone. Couples the redox reaction to proton translocation, and thus conserves the redox energy in a proton gradient. This is NAD(P)H-quinone oxidoreductase subunit 6, chloroplastic (ndhG) from Lactuca sativa (Garden lettuce).